The chain runs to 305 residues: Aspartate carbamoyltransferase catalytic subunit (305 aa).

Residues Arg-52 and Thr-53 each coordinate carbamoyl phosphate. Lys-80 is an L-aspartate binding site. Residues Arg-102, His-132, and Gln-135 each contribute to the carbamoyl phosphate site. Positions 165 and 217 each coordinate L-aspartate. Carbamoyl phosphate contacts are provided by Ala-258 and Pro-259.

This sequence belongs to the aspartate/ornithine carbamoyltransferase superfamily. ATCase family. In terms of assembly, heterododecamer (2C3:3R2) of six catalytic PyrB chains organized as two trimers (C3), and six regulatory PyrI chains organized as three dimers (R2).

It carries out the reaction carbamoyl phosphate + L-aspartate = N-carbamoyl-L-aspartate + phosphate + H(+). The protein operates within pyrimidine metabolism; UMP biosynthesis via de novo pathway; (S)-dihydroorotate from bicarbonate: step 2/3. Its function is as follows. Catalyzes the condensation of carbamoyl phosphate and aspartate to form carbamoyl aspartate and inorganic phosphate, the committed step in the de novo pyrimidine nucleotide biosynthesis pathway. This is Aspartate carbamoyltransferase catalytic subunit from Latilactobacillus sakei subsp. sakei (strain 23K) (Lactobacillus sakei subsp. sakei).